Reading from the N-terminus, the 141-residue chain is Cell division protein SepF (141 aa).

Belongs to the SepF family. As to quaternary structure, homodimer. Interacts with FtsZ.

The protein resides in the cytoplasm. Its function is as follows. Cell division protein that is part of the divisome complex and is recruited early to the Z-ring. Probably stimulates Z-ring formation, perhaps through the cross-linking of FtsZ protofilaments. Its function overlaps with FtsA. In Anoxybacillus flavithermus (strain DSM 21510 / WK1), this protein is Cell division protein SepF.